The primary structure comprises 194 residues: tRNA(Phe) 7-((3-amino-3-carboxypropyl)-4-demethylwyosine(37)-N(4))-methyltransferase 1 (194 aa).

Belongs to the TYW3 family.

It catalyses the reaction 4-demethyl-7-[(3S)-3-amino-3-carboxypropyl]wyosine(37) in tRNA(Phe) + S-adenosyl-L-methionine = 7-[(3S)-3-amino-3-carboxypropyl]wyosine(37) in tRNA(Phe) + S-adenosyl-L-homocysteine + H(+). In terms of biological role, S-adenosyl-L-methionine-dependent methyltransferase that acts as a component of the wyosine derivatives biosynthesis pathway. Probably methylates N-4 position of wybutosine-86 to produce wybutosine-72. This is tRNA(Phe) 7-((3-amino-3-carboxypropyl)-4-demethylwyosine(37)-N(4))-methyltransferase 1 from Pyrococcus abyssi (strain GE5 / Orsay).